Reading from the N-terminus, the 210-residue chain is MKFGSAVILAGGKSRRMGFDKQFLQVKNHYLLCHHGEQLAALFDKIIVVSNTPELYRETPFVVVSDEIRDKGPLGGIHIGLKTAVSDYVYFLACDMPNINLDYIRYMRQCLESSPARACITRFGDWIEPFNAFYSRDLVAAIEDYLGAGHHSLFRFLKSLATHYVSEQQARHFSPDWRMFLNLNTREDFEKWRRQGPGLGFHAPSCAASR.

Residues 9–11 (LAG), Lys21, Asp66, and Asp95 each bind GTP. Asp95 contributes to the Mg(2+) binding site.

It belongs to the MobA family. As to quaternary structure, monomer. The cofactor is Mg(2+).

The protein localises to the cytoplasm. The catalysed reaction is Mo-molybdopterin + GTP + H(+) = Mo-molybdopterin guanine dinucleotide + diphosphate. Its function is as follows. Transfers a GMP moiety from GTP to Mo-molybdopterin (Mo-MPT) cofactor (Moco or molybdenum cofactor) to form Mo-molybdopterin guanine dinucleotide (Mo-MGD) cofactor. The chain is Molybdenum cofactor guanylyltransferase from Syntrophotalea carbinolica (strain DSM 2380 / NBRC 103641 / GraBd1) (Pelobacter carbinolicus).